Reading from the N-terminus, the 471-residue chain is Thiohydroximate-O-sulfate sulfur/sulfate-lyase (nitrile-forming) NSP2 (471 aa).

A Jacalin-type lectin domain is found at 2-144; the sequence is VQKVEARGGE…LHSLGAYISS (143 aa). Kelch repeat units lie at residues 178–226, 231–277, 281–330, 332–379, 381–435, and 446–471; these read KIFS…VRMV, SLYV…SMTA, NVYV…VVQG, VWVV…VVGK, ILVF…GWSA, and GLVMFGGKAQTNDRFGDLFFYGVDSA. Arg-238 serves as the catalytic Proton donor. Positions 238, 271, 293, 322, and 371 each coordinate a (Z)-N-(sulfonatooxy)alkanimidothioate. Residue Arg-293 is the Proton donor of the active site. Glu-387, Asp-391, and His-395 together coordinate Fe(2+). Trp-433 is a binding site for a (Z)-N-(sulfonatooxy)alkanimidothioate.

It belongs to the jacalin lectin family. Fe(2+) is required as a cofactor. In terms of tissue distribution, expressed only in seeds.

The enzyme catalyses a (Z)-N-(sulfonatooxy)alkanimidothioate = a nitrile + sulfur + sulfate. It catalyses the reaction (Z)-phenyl-N-(sulfonatooxy)methanimidothioate = phenylacetonitrile + sulfur + sulfate. It carries out the reaction (Z)-N-(sulfonatooxy)prop-2-enimidothioate = but-3-enenitrile + sulfur + sulfate. The catalysed reaction is (Z)-(indol-3-yl)-N-(sulfonatooxy)methanimidothioate = (indol-3-yl)acetonitrile + sulfur + sulfate. The presence of Fe(2+) supports lyase activity in a dose-dependent manner with both benzylglucosinolate and 2-propenylglucosinolate as substrates. More active at pH 7.4 than at pH 6. Its function is as follows. Specifier protein responsible for constitutive and herbivore-induced simple nitrile formation, especially in seeds. Promotes simple nitriles, but not epithionitrile or thiocyanate formation. Converts allylglucosinolate (allyl-GSL), 2-propenylglucosinolate (sinigrin), indol-3-ylmethylglucosinolate (glucobrassicin), benzylisothiocyanate and benzylglucosinolate (glucotropaeolin) to their corresponding simple nitriles in the presence of myrosinase. Catalyzes mainly the conversion of benzylisothiocyanate when benzylglucosinolate is used as the initial substrate of myrosinase. Involved in the regulation of glucosinolate content in seeds, during stratification and germination. The polypeptide is Thiohydroximate-O-sulfate sulfur/sulfate-lyase (nitrile-forming) NSP2 (Arabidopsis thaliana (Mouse-ear cress)).